Reading from the N-terminus, the 489-residue chain is MSDRLNDQAQNRLQKLLNLKQTGNDPYLITKIENTHSAASFQKAFANQSDAELKQYQVILTGRIIALRQTFIIIQDFSGKMQLYINKKTAPELFEYFNNYIDLGDQIVATGHPMMTKTGVLTLNVERLQIVAKCLQTPPEKWHGLTDPEARARKRYLDLTYNRAQVEVFLKRTQIITAIRTFLNEAGFLEVETPILQAVLGGANAKPFKTHYNALKGDFYLRIANEIALKKLIVGGLPKVYEMGRMFRNEGVDTTHNPEFTSIEMYQANADYAVMMDLTENLIKFVCKTLNQWSFNWNGQTLDLAKPFKKVKMVDLICQVTGVNFDDVKDDQTAIALAKQHKVELKKHEQNKQHIINRFFEQFCEHTLIQPTFVTHYPKAVSPLAKQDPHNPEFTERFELFINTKELANAYSELNDPLEQRARFEQQLQEKRMGNDEASELDESFLDALSFGLPPTGGLGIGVDRLVMLLCECSSIRDVVFFPQLRELK.

Mg(2+) contacts are provided by Glu399 and Glu406.

This sequence belongs to the class-II aminoacyl-tRNA synthetase family. Homodimer. It depends on Mg(2+) as a cofactor.

The protein resides in the cytoplasm. It carries out the reaction tRNA(Lys) + L-lysine + ATP = L-lysyl-tRNA(Lys) + AMP + diphosphate. The polypeptide is Lysine--tRNA ligase (lysS) (Mycoplasma pneumoniae (strain ATCC 29342 / M129 / Subtype 1) (Mycoplasmoides pneumoniae)).